The following is a 435-amino-acid chain: Adenylosuccinate synthetase (435 aa).

Residues 13–19 and 41–43 each bind GTP; these read GDEGKGK and GHT. Catalysis depends on Asp14, which acts as the Proton acceptor. The Mg(2+) site is built by Asp14 and Gly41. Residues 14–17, 39–42, Thr131, Arg145, Gln226, Thr241, and Arg309 contribute to the IMP site; these read DEGK and NAGH. Residue His42 is the Proton donor of the active site. Residue 305–311 participates in substrate binding; that stretch reads TVTGRKR. GTP contacts are provided by residues Arg311, 337–339, and 419–421; these read KLD and STG.

Belongs to the adenylosuccinate synthetase family. As to quaternary structure, homodimer. Mg(2+) serves as cofactor.

It is found in the cytoplasm. It carries out the reaction IMP + L-aspartate + GTP = N(6)-(1,2-dicarboxyethyl)-AMP + GDP + phosphate + 2 H(+). Its pathway is purine metabolism; AMP biosynthesis via de novo pathway; AMP from IMP: step 1/2. Its function is as follows. Plays an important role in the de novo pathway of purine nucleotide biosynthesis. Catalyzes the first committed step in the biosynthesis of AMP from IMP. This Dechloromonas aromatica (strain RCB) protein is Adenylosuccinate synthetase.